Here is a 178-residue protein sequence, read N- to C-terminus: Adenine phosphoribosyltransferase (178 aa).

The protein belongs to the purine/pyrimidine phosphoribosyltransferase family. As to quaternary structure, homodimer.

The protein localises to the cytoplasm. It catalyses the reaction AMP + diphosphate = 5-phospho-alpha-D-ribose 1-diphosphate + adenine. It participates in purine metabolism; AMP biosynthesis via salvage pathway; AMP from adenine: step 1/1. In terms of biological role, catalyzes a salvage reaction resulting in the formation of AMP, that is energically less costly than de novo synthesis. The sequence is that of Adenine phosphoribosyltransferase from Helicobacter hepaticus (strain ATCC 51449 / 3B1).